A 599-amino-acid chain; its full sequence is Elongation factor 4 (599 aa).

A tr-type G domain is found at 2 to 184 (KHIRNFSIIA…RLVRDIPPPE (183 aa)). GTP contacts are provided by residues 14-19 (DHGKST) and 131-134 (NKID).

The protein belongs to the TRAFAC class translation factor GTPase superfamily. Classic translation factor GTPase family. LepA subfamily.

The protein resides in the cell inner membrane. It catalyses the reaction GTP + H2O = GDP + phosphate + H(+). Required for accurate and efficient protein synthesis under certain stress conditions. May act as a fidelity factor of the translation reaction, by catalyzing a one-codon backward translocation of tRNAs on improperly translocated ribosomes. Back-translocation proceeds from a post-translocation (POST) complex to a pre-translocation (PRE) complex, thus giving elongation factor G a second chance to translocate the tRNAs correctly. Binds to ribosomes in a GTP-dependent manner. The protein is Elongation factor 4 of Erwinia tasmaniensis (strain DSM 17950 / CFBP 7177 / CIP 109463 / NCPPB 4357 / Et1/99).